The chain runs to 593 residues: UvrABC system protein C (593 aa).

The GIY-YIG domain maps to 17–94 (MEPGCYLMKD…IKQYQPRYNI (78 aa)). The UVR domain occupies 199–234 (KTILKSLEERMLTASESLDFERAKEYRDLIQHIQNL).

The protein belongs to the UvrC family. Interacts with UvrB in an incision complex.

The protein resides in the cytoplasm. The UvrABC repair system catalyzes the recognition and processing of DNA lesions. UvrC both incises the 5' and 3' sides of the lesion. The N-terminal half is responsible for the 3' incision and the C-terminal half is responsible for the 5' incision. The sequence is that of UvrABC system protein C from Staphylococcus aureus (strain USA300).